Here is a 354-residue protein sequence, read N- to C-terminus: Uroporphyrinogen decarboxylase (354 aa).

Residues 27–31 (RQAGR), Asp-77, Tyr-154, Thr-209, and His-327 contribute to the substrate site.

This sequence belongs to the uroporphyrinogen decarboxylase family. As to quaternary structure, homodimer.

It localises to the cytoplasm. The catalysed reaction is uroporphyrinogen III + 4 H(+) = coproporphyrinogen III + 4 CO2. It functions in the pathway porphyrin-containing compound metabolism; protoporphyrin-IX biosynthesis; coproporphyrinogen-III from 5-aminolevulinate: step 4/4. In terms of biological role, catalyzes the decarboxylation of four acetate groups of uroporphyrinogen-III to yield coproporphyrinogen-III. In Salmonella newport (strain SL254), this protein is Uroporphyrinogen decarboxylase.